Consider the following 176-residue polypeptide: Large ribosomal subunit protein uL10 (176 aa).

The protein belongs to the universal ribosomal protein uL10 family. Part of the ribosomal stalk of the 50S ribosomal subunit. The N-terminus interacts with L11 and the large rRNA to form the base of the stalk. The C-terminus forms an elongated spine to which L12 dimers bind in a sequential fashion forming a multimeric L10(L12)X complex.

Functionally, forms part of the ribosomal stalk, playing a central role in the interaction of the ribosome with GTP-bound translation factors. This chain is Large ribosomal subunit protein uL10, found in Alcanivorax borkumensis (strain ATCC 700651 / DSM 11573 / NCIMB 13689 / SK2).